A 397-amino-acid chain; its full sequence is Mannonate dehydratase (397 aa).

This sequence belongs to the mannonate dehydratase family. It depends on Fe(2+) as a cofactor. Mn(2+) is required as a cofactor.

The enzyme catalyses D-mannonate = 2-dehydro-3-deoxy-D-gluconate + H2O. It participates in carbohydrate metabolism; pentose and glucuronate interconversion. In terms of biological role, catalyzes the dehydration of D-mannonate. The polypeptide is Mannonate dehydratase (Yersinia pestis bv. Antiqua (strain Antiqua)).